Here is a 158-residue protein sequence, read N- to C-terminus: Transcriptional repressor NrdR (158 aa).

Residues 3 to 34 (CPFCNSEETRVIDTRLTDDGHVVRRRRECEHC) fold into a zinc finger. An ATP-cone domain is found at 49–139 (IFVVKKGGQR…VYKEFRDLDH (91 aa)).

Belongs to the NrdR family. It depends on Zn(2+) as a cofactor.

In terms of biological role, negatively regulates transcription of bacterial ribonucleotide reductase nrd genes and operons by binding to NrdR-boxes. This is Transcriptional repressor NrdR from Kosmotoga olearia (strain ATCC BAA-1733 / DSM 21960 / TBF 19.5.1).